We begin with the raw amino-acid sequence, 312 residues long: Ribosomal protein L11 methyltransferase (312 aa).

The S-adenosyl-L-methionine site is built by Thr162, Gly183, Asp205, and Asn248.

The protein belongs to the methyltransferase superfamily. PrmA family.

It localises to the cytoplasm. It catalyses the reaction L-lysyl-[protein] + 3 S-adenosyl-L-methionine = N(6),N(6),N(6)-trimethyl-L-lysyl-[protein] + 3 S-adenosyl-L-homocysteine + 3 H(+). In terms of biological role, methylates ribosomal protein L11. This Geobacillus kaustophilus (strain HTA426) protein is Ribosomal protein L11 methyltransferase.